The sequence spans 414 residues: Gamma-glutamyl phosphate reductase (414 aa).

It belongs to the gamma-glutamyl phosphate reductase family.

It is found in the cytoplasm. It carries out the reaction L-glutamate 5-semialdehyde + phosphate + NADP(+) = L-glutamyl 5-phosphate + NADPH + H(+). It participates in amino-acid biosynthesis; L-proline biosynthesis; L-glutamate 5-semialdehyde from L-glutamate: step 2/2. Its function is as follows. Catalyzes the NADPH-dependent reduction of L-glutamate 5-phosphate into L-glutamate 5-semialdehyde and phosphate. The product spontaneously undergoes cyclization to form 1-pyrroline-5-carboxylate. This is Gamma-glutamyl phosphate reductase from Limosilactobacillus reuteri (strain DSM 20016) (Lactobacillus reuteri).